We begin with the raw amino-acid sequence, 52 residues long: Sperm protamine P1 (52 aa).

The protein belongs to the protamine P1 family. Cross-linked by interchain disulfide bonds around the DNA-helix. In terms of tissue distribution, testis.

It localises to the nucleus. It is found in the chromosome. Protamines substitute for histones in the chromatin of sperm during the haploid phase of spermatogenesis. They compact sperm DNA into a highly condensed, stable and inactive complex. This chain is Sperm protamine P1 (PRM1), found in Alouatta seniculus (Red howler monkey).